The sequence spans 1205 residues: ATP-dependent DNA helicase MER3 homolog (1205 aa).

The 196-residue stretch at 41 to 236 (PACFLSDVNM…WLAVPSEGIK (196 aa)) folds into the Helicase ATP-binding domain. 54–61 (APTGSGKT) contacts ATP. The DEAH box motif lies at 172 to 175 (DEVH). Residues 266–467 (RLQSFIFDIL…CAVEHLNAEI (202 aa)) enclose the Helicase C-terminal domain. The region spanning 541–852 (PLEPGRLMTK…FEEYVGLDIH (312 aa)) is the SEC63 domain. The span at 1075 to 1091 (QKSEILNRTQGKNSTQL) shows a compositional bias: polar residues. The interval 1075–1131 (QKSEILNRTQGKNSTQLAGKKAFEKSKTPDENSLHFVGKRDSSSEKSKALSKTPDEN) is disordered. Residues 1095-1122 (KAFEKSKTPDENSLHFVGKRDSSSEKSK) are compositionally biased toward basic and acidic residues.

The protein belongs to the helicase family. SKI2 subfamily. As to expression, transcribed preferentially in early stages of meiocyte development and during meiosis in young flowers.

Its subcellular location is the nucleus. The protein resides in the chromosome. The catalysed reaction is Couples ATP hydrolysis with the unwinding of duplex DNA by translocating in the 3'-5' direction.. It carries out the reaction ATP + H2O = ADP + phosphate + H(+). Its function is as follows. DNA helicase required for crossover formation, complete synapsis of homologous chromosomes and bivalent formation during meiosis. Is specific to recombination events resulting in interference-sensitive crossovers (class I meiotic crossover). Works cooperatively with ZIP4 to promote crossovers. The sequence is that of ATP-dependent DNA helicase MER3 homolog from Oryza sativa subsp. japonica (Rice).